Consider the following 513-residue polypeptide: NADH-quinone oxidoreductase subunit N (513 aa).

The next 14 helical transmembrane spans lie at 20-40, 49-69, 88-108, 117-137, 144-164, 178-198, 219-239, 260-280, 295-315, 323-343, 351-371, 394-414, 429-451, and 474-494; these read SVGFFIPEIYLSLLFMILIVV, STLLSVFSLVGLAGSLYFIYQ, FAIFFKYFFVLSGMLAVVITM, ISSMGEYYALVVAMVVGMMMM, LMIFLSMELVSFTAFILAGYF, LIYGAVSSGLMIYGFSLIYGV, FVMLFAALLVLAGFGYKIGAV, LSVASKAAGFALLMRFVYVAL, WFTLLVILAVASMIYGNVVAL, LLAYSSIAHAGYALLGVIVMD, LFYLLSYLLMNFGAFFVVVLI, GAALTVFLISLVGLPPTIGFI, IFMWLALIGILTSVISLYYYMLI, and LVAQLFMGALMLLTIYFGLFF.

It belongs to the complex I subunit 2 family. NDH-1 is composed of 14 different subunits. Subunits NuoA, H, J, K, L, M, N constitute the membrane sector of the complex.

Its subcellular location is the cell inner membrane. It catalyses the reaction a quinone + NADH + 5 H(+)(in) = a quinol + NAD(+) + 4 H(+)(out). In terms of biological role, NDH-1 shuttles electrons from NADH, via FMN and iron-sulfur (Fe-S) centers, to quinones in the respiratory chain. The immediate electron acceptor for the enzyme in this species is believed to be a menaquinone. Couples the redox reaction to proton translocation (for every two electrons transferred, four hydrogen ions are translocated across the cytoplasmic membrane), and thus conserves the redox energy in a proton gradient. This Chlorobium chlorochromatii (strain CaD3) protein is NADH-quinone oxidoreductase subunit N.